The chain runs to 122 residues: Large ribosomal subunit protein uL14 (122 aa).

The protein belongs to the universal ribosomal protein uL14 family. In terms of assembly, part of the 50S ribosomal subunit. Forms a cluster with proteins L3 and L19. In the 70S ribosome, L14 and L19 interact and together make contacts with the 16S rRNA in bridges B5 and B8.

In terms of biological role, binds to 23S rRNA. Forms part of two intersubunit bridges in the 70S ribosome. This Levilactobacillus brevis (strain ATCC 367 / BCRC 12310 / CIP 105137 / JCM 1170 / LMG 11437 / NCIMB 947 / NCTC 947) (Lactobacillus brevis) protein is Large ribosomal subunit protein uL14.